A 241-amino-acid polypeptide reads, in one-letter code: Adenosylcobinamide-GDP ribazoletransferase (241 aa).

7 helical membrane passes run 34–54 (RIPAYFTIVGYIPGLIYFTGS), 55–75 (FLSLNFGIIAPLLSIVLGFYL), 109–129 (VGPFAVFYGVLYVIVFWELIT), 133–153 (PVAFVFGSVFGRYTMDVVLVF), 165–185 (MLFPFNRFLLVPATLFTLPLL), 186–206 (LIDVKLFLVSIFSSWLVGFLI), and 221–241 (VLGGSCLIGQIVVLLILNYLI).

The protein belongs to the CobS family. Requires Mg(2+) as cofactor.

The protein resides in the cell inner membrane. It catalyses the reaction alpha-ribazole + adenosylcob(III)inamide-GDP = adenosylcob(III)alamin + GMP + H(+). The catalysed reaction is alpha-ribazole 5'-phosphate + adenosylcob(III)inamide-GDP = adenosylcob(III)alamin 5'-phosphate + GMP + H(+). Its pathway is cofactor biosynthesis; adenosylcobalamin biosynthesis; adenosylcobalamin from cob(II)yrinate a,c-diamide: step 7/7. Functionally, joins adenosylcobinamide-GDP and alpha-ribazole to generate adenosylcobalamin (Ado-cobalamin). Also synthesizes adenosylcobalamin 5'-phosphate from adenosylcobinamide-GDP and alpha-ribazole 5'-phosphate. This is Adenosylcobinamide-GDP ribazoletransferase from Fervidobacterium nodosum (strain ATCC 35602 / DSM 5306 / Rt17-B1).